The chain runs to 389 residues: Lipid-A-disaccharide synthase (389 aa).

The protein belongs to the LpxB family.

The catalysed reaction is a lipid X + a UDP-2-N,3-O-bis[(3R)-3-hydroxyacyl]-alpha-D-glucosamine = a lipid A disaccharide + UDP + H(+). The protein operates within bacterial outer membrane biogenesis; LPS lipid A biosynthesis. Functionally, condensation of UDP-2,3-diacylglucosamine and 2,3-diacylglucosamine-1-phosphate to form lipid A disaccharide, a precursor of lipid A, a phosphorylated glycolipid that anchors the lipopolysaccharide to the outer membrane of the cell. The polypeptide is Lipid-A-disaccharide synthase (Verminephrobacter eiseniae (strain EF01-2)).